We begin with the raw amino-acid sequence, 285 residues long: Alpha-acetolactate decarboxylase (285 aa).

An N-terminal signal peptide occupies residues Met-1–Ala-25.

It belongs to the alpha-acetolactate decarboxylase family.

It catalyses the reaction (2S)-2-acetolactate + H(+) = (R)-acetoin + CO2. It functions in the pathway polyol metabolism; (R,R)-butane-2,3-diol biosynthesis; (R,R)-butane-2,3-diol from pyruvate: step 2/3. Its function is as follows. Converts acetolactate into acetoin, which can be excreted by the cells. This may be a mechanism for controlling the internal pH of cells in the stationary stage. The sequence is that of Alpha-acetolactate decarboxylase (aldB) from Brevibacillus brevis (Bacillus brevis).